Consider the following 354-residue polypeptide: Uroporphyrinogen decarboxylase (354 aa).

Substrate is bound by residues arginine 27–arginine 31, aspartate 77, tyrosine 154, threonine 209, and histidine 327.

This sequence belongs to the uroporphyrinogen decarboxylase family. In terms of assembly, homodimer.

It is found in the cytoplasm. The catalysed reaction is uroporphyrinogen III + 4 H(+) = coproporphyrinogen III + 4 CO2. It participates in porphyrin-containing compound metabolism; protoporphyrin-IX biosynthesis; coproporphyrinogen-III from 5-aminolevulinate: step 4/4. Catalyzes the decarboxylation of four acetate groups of uroporphyrinogen-III to yield coproporphyrinogen-III. The chain is Uroporphyrinogen decarboxylase from Pseudomonas putida (strain ATCC 700007 / DSM 6899 / JCM 31910 / BCRC 17059 / LMG 24140 / F1).